An 81-amino-acid polypeptide reads, in one-letter code: Acyl carrier protein (81 aa).

The region spanning 2-80 (ASNEEILAGL…DAVSFIANAQ (79 aa)) is the Carrier domain. Residue S40 is modified to O-(pantetheine 4'-phosphoryl)serine.

It belongs to the acyl carrier protein (ACP) family. Post-translationally, 4'-phosphopantetheine is transferred from CoA to a specific serine of apo-ACP by AcpS. This modification is essential for activity because fatty acids are bound in thioester linkage to the sulfhydryl of the prosthetic group.

The protein localises to the cytoplasm. Its pathway is lipid metabolism; fatty acid biosynthesis. Its function is as follows. Carrier of the growing fatty acid chain in fatty acid biosynthesis. The protein is Acyl carrier protein of Paenarthrobacter aurescens (strain TC1).